The sequence spans 317 residues: MLNPQLNRHGELIHLLSTEGLPRRIIEQILDLAATFVPAPGQEFPKLPLLHGKSVFNLFFENSTRTRTTFEIAAKRLSADVVNLNIAASSTSKGESLLDTIANLSAMQADLFVVRHGASGAPYLIAQHVAPHVHVINAGDGRHAHPTQALLDMYTIRHHKGDFNQLTVAIVGDVLHSRVARSDIHALTTLGVPEVRVVAPATLLPEGLAQMGVRVCTDMEEGLRDADVVIMLRLQNERMRGALLPSAHEYFKHYGLTQARLALARPDAIVMHPGPMNRGVEIASEVADSGQAVILDQVTFGIAVRMAAMSLVAGVRP.

The carbamoyl phosphate site is built by arginine 65 and threonine 66. Lysine 93 is an L-aspartate binding site. 3 residues coordinate carbamoyl phosphate: arginine 115, histidine 145, and glutamine 148. Residues arginine 178 and arginine 233 each coordinate L-aspartate. The carbamoyl phosphate site is built by glycine 274 and proline 275.

The protein belongs to the aspartate/ornithine carbamoyltransferase superfamily. ATCase family. As to quaternary structure, heterododecamer (2C3:3R2) of six catalytic PyrB chains organized as two trimers (C3), and six regulatory PyrI chains organized as three dimers (R2).

It carries out the reaction carbamoyl phosphate + L-aspartate = N-carbamoyl-L-aspartate + phosphate + H(+). It functions in the pathway pyrimidine metabolism; UMP biosynthesis via de novo pathway; (S)-dihydroorotate from bicarbonate: step 2/3. In terms of biological role, catalyzes the condensation of carbamoyl phosphate and aspartate to form carbamoyl aspartate and inorganic phosphate, the committed step in the de novo pyrimidine nucleotide biosynthesis pathway. This chain is Aspartate carbamoyltransferase catalytic subunit, found in Bordetella bronchiseptica (strain ATCC BAA-588 / NCTC 13252 / RB50) (Alcaligenes bronchisepticus).